The primary structure comprises 220 residues: Charged multivesicular body protein 2a (220 aa).

A coiled-coil region spans residues 12–53 (EEMLRQNQRALNRAMRDLDRERQRLEQQEKKIIADIKKMAKQ). Residues 184 to 220 (ATGGSLSVAAGKKAEPQPTLADADADLEERLNNLRRD) form a disordered region. Residues 208–218 (ADLEERLNNLR) carry the MIT-interacting motif motif. A compositionally biased stretch (basic and acidic residues) spans 211 to 220 (EERLNNLRRD).

The protein belongs to the SNF7 family. In terms of assembly, probable core component of the endosomal sorting required for transport complex III (ESCRT-III). ESCRT-III components are thought to multimerize to form a flat lattice on the perimeter membrane of the endosome.

The protein resides in the late endosome membrane. It localises to the cytoplasm. Its function is as follows. Probable core component of the endosomal sorting required for transport complex III (ESCRT-III) which is involved in multivesicular bodies (MVBs) formation and sorting of endosomal cargo proteins into MVBs. MVBs contain intraluminal vesicles (ILVs) that are generated by invagination and scission from the limiting membrane of the endosome and mostly are delivered to lysosomes enabling degradation of membrane proteins, such as stimulated growth factor receptors, lysosomal enzymes and lipids. The polypeptide is Charged multivesicular body protein 2a (chmp2a) (Danio rerio (Zebrafish)).